The sequence spans 92 residues: MLCAVYKSSRKADTYLFVNKRDCFDDVPQALLEMFGVPQLVMVFPIAKRESLGIADIQKVRAALEEKGFYLQIPPPQVNLLAEHRESLGIKD.

The 85-residue stretch at 1–85 (MLCAVYKSSR…PQVNLLAEHR (85 aa)) folds into the YcgL domain.

The sequence is that of YcgL domain-containing protein Shewana3_2381 from Shewanella sp. (strain ANA-3).